A 758-amino-acid polypeptide reads, in one-letter code: Long-chain-alcohol oxidase FAO1 (758 aa).

Transmembrane regions (helical) follow at residues 102-122 (IVLR…LVCL) and 155-175 (PLAR…YFTW). Position 246 to 261 (246 to 261 (CDAVVVGSGCGGGVAA)) interacts with FAD. Histidine 689 acts as the Proton acceptor in catalysis.

The protein belongs to the GMC oxidoreductase family.

The protein localises to the membrane. The enzyme catalyses a long-chain primary fatty alcohol + O2 = a long-chain fatty aldehyde + H2O2. Functionally, long-chain fatty alcohol oxidase involved in the omega-oxidation pathway of lipid degradation. This Arabidopsis thaliana (Mouse-ear cress) protein is Long-chain-alcohol oxidase FAO1 (FAO1).